Here is a 330-residue protein sequence, read N- to C-terminus: tRNA pseudouridine synthase B (330 aa).

Asp42 (nucleophile) is an active-site residue.

This sequence belongs to the pseudouridine synthase TruB family. Type 1 subfamily.

It catalyses the reaction uridine(55) in tRNA = pseudouridine(55) in tRNA. Responsible for synthesis of pseudouridine from uracil-55 in the psi GC loop of transfer RNAs. This chain is tRNA pseudouridine synthase B, found in Lactococcus lactis subsp. cremoris (strain SK11).